The sequence spans 354 residues: Thiamine thiazole synthase (354 aa).

Substrate-binding positions include alanine 83, glutamate 104–alanine 105, glycine 112, and valine 177. 2,3-didehydroalanine (Cys) is present on cysteine 210. Substrate contacts are provided by residues aspartate 212, histidine 227, methionine 305, and arginine 315–glycine 317.

Belongs to the THI4 family. As to quaternary structure, homooctamer. Requires Fe cation as cofactor. Post-translationally, during the catalytic reaction, a sulfide is transferred from Cys-210 to a reaction intermediate, generating a dehydroalanine residue.

Its subcellular location is the cytoplasm. The protein resides in the nucleus. The catalysed reaction is [ADP-thiazole synthase]-L-cysteine + glycine + NAD(+) = [ADP-thiazole synthase]-dehydroalanine + ADP-5-ethyl-4-methylthiazole-2-carboxylate + nicotinamide + 3 H2O + 2 H(+). Functionally, involved in biosynthesis of the thiamine precursor thiazole. Catalyzes the conversion of NAD and glycine to adenosine diphosphate 5-(2-hydroxyethyl)-4-methylthiazole-2-carboxylic acid (ADT), an adenylated thiazole intermediate. The reaction includes an iron-dependent sulfide transfer from a conserved cysteine residue of the protein to a thiazole intermediate. The enzyme can only undergo a single turnover, which suggests it is a suicide enzyme. May have additional roles in adaptation to various stress conditions and in DNA damage tolerance. In Candida albicans (strain SC5314 / ATCC MYA-2876) (Yeast), this protein is Thiamine thiazole synthase.